Reading from the N-terminus, the 151-residue chain is MSTTARRRLMRDFKRMQQDPPQGVSASPVADNVLTWNAVIIGPAETPFEDGTFRMVLQFDEQYPNKPPAVKFVSQMFHPNVYSSGELCLDILQNRWSPTYDVAAILTSVQSLLNDPNTSSPANVEASMLYKDHRQQYEKRVRDTVEASWTD.

The interval 1–26 (MSTTARRRLMRDFKRMQQDPPQGVSA) is disordered. In terms of domain architecture, UBC core spans 4 to 150 (TARRRLMRDF…VRDTVEASWT (147 aa)). Cys-88 functions as the Glycyl thioester intermediate in the catalytic mechanism.

It belongs to the ubiquitin-conjugating enzyme family.

Its subcellular location is the cytoplasm. It is found in the nucleus. It carries out the reaction S-ubiquitinyl-[E1 ubiquitin-activating enzyme]-L-cysteine + [E2 ubiquitin-conjugating enzyme]-L-cysteine = [E1 ubiquitin-activating enzyme]-L-cysteine + S-ubiquitinyl-[E2 ubiquitin-conjugating enzyme]-L-cysteine.. It participates in protein modification; protein ubiquitination. Catalyzes the covalent attachment of ubiquitin to other proteins. Plays a role in transcription regulation by catalyzing the monoubiquitination of histone H2B to form H2BK123ub1. H2BK123ub1 gives a specific tag for epigenetic transcriptional activation and is also a prerequisite for H3K4me and H3K79me formation. Also involved in postreplication repair of UV-damaged DNA, in N-end rule-dependent protein degradation and in sporulation. The chain is Ubiquitin-conjugating enzyme E2 2 (UBC2) from Yarrowia lipolytica (strain CLIB 122 / E 150) (Yeast).